The primary structure comprises 1156 residues: Cartilage intermediate layer protein 2 (1156 aa).

The first 20 residues, 1 to 20, serve as a signal peptide directing secretion; that stretch reads MASLLPLLCLCVVAAHLAGA. The TSP type-1 domain maps to 146–197; the sequence is EASWGAWGPWGPCSGSCGPGRRLRRRHCPSPAGDACPGRPLEAQKCVRPRCP. 3 disulfide bridges follow: cysteine 158–cysteine 191, cysteine 162–cysteine 196, and cysteine 173–cysteine 181. N-linked (GlcNAc...) asparagine glycans are attached at residues asparagine 276, asparagine 308, and asparagine 329. The Ig-like C2-type domain maps to 292–376; it reads PYLVKHPESR…AVRSGTARLT (85 aa). Cysteine 313 and cysteine 359 are joined by a disulfide. Residues 1134 to 1156 are disordered; it reads SEAAQAQARASGPLRTRRGRVRQ.

May be cleaved into 2 chains possibly by a furin-like protease upon or preceding secretion. As to expression, expressed in articular chondrocytes but not in knee meniscal cartilage cells. Localizes to the intermediate to deep zone of articular cartilage.

The protein localises to the secreted. It is found in the extracellular space. It localises to the extracellular matrix. Its function is as follows. May play a role in cartilage scaffolding. This Homo sapiens (Human) protein is Cartilage intermediate layer protein 2 (CILP2).